A 424-amino-acid chain; its full sequence is 3-ketoacyl-CoA thiolase B, peroxisomal (424 aa).

The transit peptide at 1 to 26 directs the protein to the peroxisome; sequence MHRLQVVLGHLAGRPESSSALQAAPC. A PTS2-type peroxisomal targeting signal region spans residues 1 to 26; sequence MHRLQVVLGHLAGRPESSSALQAAPC. Catalysis depends on cysteine 123, which acts as the Acyl-thioester intermediate. An N6-acetyllysine mark is found at lysine 173 and lysine 234. Residues arginine 249, threonine 252, and serine 276 each contribute to the CoA site. The active-site Proton donor/acceptor is cysteine 408.

The protein belongs to the thiolase-like superfamily. Thiolase family. In terms of assembly, homodimer. Interacts (via PTS2-type peroxisomal targeting signal region) with PEX7; leading to its translocation into peroxisomes. As to expression, mainly expressed in liver; weaker levels in kidney, intestine and white adipose tissue.

The protein localises to the peroxisome. The enzyme catalyses an acyl-CoA + acetyl-CoA = a 3-oxoacyl-CoA + CoA. It carries out the reaction 2 acetyl-CoA = acetoacetyl-CoA + CoA. The catalysed reaction is hexanoyl-CoA + acetyl-CoA = 3-oxooctanoyl-CoA + CoA. It catalyses the reaction tetradecanoyl-CoA + acetyl-CoA = 3-oxohexadecanoyl-CoA + CoA. The enzyme catalyses 3-oxohexadecanedioyl-CoA + CoA = tetradecanedioyl-CoA + acetyl-CoA. It carries out the reaction 3-oxo-(6Z,9Z,12Z,15Z,18Z,21Z)-tetracosahexaenoyl-CoA + CoA = (4Z,7Z,10Z,13Z,16Z,19Z)-docosahexaenoyl-CoA + acetyl-CoA. It participates in lipid metabolism; peroxisomal fatty acid beta-oxidation. Functionally, responsible for the thiolytic cleavage of straight chain 3-keto fatty acyl-CoAs (3-oxoacyl-CoAs). Plays an important role in fatty acid peroxisomal beta-oxidation. Catalyzes the cleavage of short, medium, long, and very long straight chain 3-oxoacyl-CoAs. The chain is 3-ketoacyl-CoA thiolase B, peroxisomal from Mus musculus (Mouse).